We begin with the raw amino-acid sequence, 304 residues long: MNQNKNYRVLFSNLYKDTQIQENAKMSEHINFRVGGPVDILLTPNTKEQIVETIKICKENKIPFYVLGNGSNVLVKDSGIRGVVIKLSEFDNIVRTGNTIKAESGALLKDVSAEALKASLTGFEFACGIPGSVGGAVFMNAGAYDGEISFVIKEAEVMSEDGKIITLSKDQLELGYRTSAIMKKNYIVITATFCFESGEKDKIEGRVSELTNKREEKQPLEFPSAGSTFKRPEGHFAGKLIQDAGLKDFTLGGAAVSGKHCGFIINKSNATAKDILDLIEYVQKEVKKQFGVDLYPEVRIIGED.

The region spanning arginine 33–glycine 198 is the FAD-binding PCMH-type domain. Arginine 177 is an active-site residue. Serine 227 (proton donor) is an active-site residue. Residue glutamate 297 is part of the active site.

It belongs to the MurB family. Requires FAD as cofactor.

It localises to the cytoplasm. It carries out the reaction UDP-N-acetyl-alpha-D-muramate + NADP(+) = UDP-N-acetyl-3-O-(1-carboxyvinyl)-alpha-D-glucosamine + NADPH + H(+). The protein operates within cell wall biogenesis; peptidoglycan biosynthesis. Functionally, cell wall formation. The polypeptide is UDP-N-acetylenolpyruvoylglucosamine reductase (Clostridium botulinum (strain Alaska E43 / Type E3)).